We begin with the raw amino-acid sequence, 514 residues long: MGLPWYRVHTAVINDPGRLLAVHLMHTALVLGWAGSMALYELAVFDPSDAVLNPMWRQGMFVLPFMTRLGVTHSWSGWTVTGEPWINEPGFLNAHFNFWSYEGVALMHIVLSGLFFLAAVWHWVYWDLDLFEDPRTGEPALDLPKIFGGHLFLLGFLCFNFGTFHLTGIFGPGMWVSDAYGLTGHIEHIAPEWGPAGFNPFNPGGVVAHHIAAGITLMIGGVFHLTARPPERLYTALRMGNVETALASAIAAVFGAAFVVAGTMWYGHVTTPIELFGPTRYQWDQGYFTQEIQRRVDSQLAEGASLSEAWSSIPEKLAFYDYVGNSPAKGGLFRVGAMDSGDGIAEEWLGHPVFQDGAGRALSVRRLPNFFENFPVILTDGDGVVRADIPFRRSESQYSFEQTGVTVSFYGGALDGQTFTNPSDVKKFARRAQLGEAFDFDTETLGSDGVFRTSTRGWFTFGHACFALLFFFGHIWHGARTLFRDVFAGIDADLGEQIEFGAFQKLGDLTTRKS.

The next 6 membrane-spanning stretches (helical) occupy residues 21 to 36 (AVHLMHTALVLGWAGS), 109 to 123 (IVLSGLFFLAAVWHW), 148 to 164 (GGHLFLLGFLCFNFGTF), 211 to 226 (IAAGITLMIGGVFHLT), 245 to 260 (ALASAIAAVFGAAFVV), and 465 to 480 (CFALLFFFGHIWHGAR).

Belongs to the PsbB/PsbC family. PsbB subfamily. PSII is composed of 1 copy each of membrane proteins PsbA, PsbB, PsbC, PsbD, PsbE, PsbF, PsbH, PsbI, PsbJ, PsbK, PsbL, PsbM, PsbT, PsbX, PsbY, PsbZ, Psb30/Ycf12, peripheral proteins PsbO, CyanoQ (PsbQ), PsbU, PsbV and a large number of cofactors. It forms dimeric complexes. The cofactor is Binds multiple chlorophylls. PSII binds additional chlorophylls, carotenoids and specific lipids..

It is found in the cellular thylakoid membrane. One of the components of the core complex of photosystem II (PSII). It binds chlorophyll and helps catalyze the primary light-induced photochemical processes of PSII. PSII is a light-driven water:plastoquinone oxidoreductase, using light energy to abstract electrons from H(2)O, generating O(2) and a proton gradient subsequently used for ATP formation. In Prochlorothrix hollandica, this protein is Photosystem II CP47 reaction center protein.